Reading from the N-terminus, the 440-residue chain is Protein disulfide-isomerase A6 (440 aa).

An N-terminal signal peptide occupies residues 1–19 (MARLVLGLVSCTFFLAVSG). Thioredoxin domains are found at residues 20 to 133 (LYSS…ALRQ) and 151 to 287 (QGRG…EDIA). The cysteines at positions 55 and 58 are disulfide-linked. Phosphoserine occurs at positions 129, 156, and 158. Residues 139-161 (LGGRSGGYSSGKQGRGDSSSKKD) form a disordered region. Over residues 152–161 (GRGDSSSKKD) the composition is skewed to basic and acidic residues. The cysteines at positions 190 and 193 are disulfide-linked. Positions 399–440 (GGGSFPTITPREPWDGKDGELPVEDDIDLSDVELDDLEKDEL) are disordered. Positions 419–440 (LPVEDDIDLSDVELDDLEKDEL) are enriched in acidic residues. Ser428 carries the post-translational modification Phosphoserine. The Prevents secretion from ER motif lies at 437-440 (KDEL).

This sequence belongs to the protein disulfide isomerase family. As to quaternary structure, part of a large chaperone multiprotein complex comprising DNAJB11, HSP90B1, HSPA5, HYOU, PDIA2, PDIA4, PDIA6, PPIB, SDF2L1, UGGT1 and very small amounts of ERP29, but not, or at very low levels, CALR nor CANX. Interacts with MICA on the surface of tumor cells, leading to MICA disulfide bond reduction which is required for its release from tumor cells. Interacts with ITGB3 following platelet stimulation. Interacts with ERN1; the interaction is direct. Interacts with EIF2AK3.

Its subcellular location is the endoplasmic reticulum lumen. It is found in the cell membrane. It localises to the melanosome. The enzyme catalyses Catalyzes the rearrangement of -S-S- bonds in proteins.. Functionally, may function as a chaperone that inhibits aggregation of misfolded proteins. Negatively regulates the unfolded protein response (UPR) through binding to UPR sensors such as ERN1, which in turn inactivates ERN1 signaling. May also regulate the UPR via the EIF2AK3 UPR sensor. Plays a role in platelet aggregation and activation by agonists such as convulxin, collagen and thrombin. The chain is Protein disulfide-isomerase A6 (Pdia6) from Mus musculus (Mouse).